The primary structure comprises 347 residues: Probable dual-specificity RNA methyltransferase RlmN (347 aa).

Glu94 serves as the catalytic Proton acceptor. The region spanning 100-319 (YPSRTIACIS…LDTLVKNGID (220 aa)) is the Radical SAM core domain. A disulfide bond links Cys107 and Cys334. Residues Cys114, Cys118, and Cys121 each coordinate [4Fe-4S] cluster. Residues 161-162 (GE), Ser193, 216-218 (SLH), and Asn292 contribute to the S-adenosyl-L-methionine site. The active-site S-methylcysteine intermediate is Cys334.

It belongs to the radical SAM superfamily. RlmN family. It depends on [4Fe-4S] cluster as a cofactor.

The protein localises to the cytoplasm. The enzyme catalyses adenosine(2503) in 23S rRNA + 2 reduced [2Fe-2S]-[ferredoxin] + 2 S-adenosyl-L-methionine = 2-methyladenosine(2503) in 23S rRNA + 5'-deoxyadenosine + L-methionine + 2 oxidized [2Fe-2S]-[ferredoxin] + S-adenosyl-L-homocysteine. It catalyses the reaction adenosine(37) in tRNA + 2 reduced [2Fe-2S]-[ferredoxin] + 2 S-adenosyl-L-methionine = 2-methyladenosine(37) in tRNA + 5'-deoxyadenosine + L-methionine + 2 oxidized [2Fe-2S]-[ferredoxin] + S-adenosyl-L-homocysteine. Its function is as follows. Specifically methylates position 2 of adenine 2503 in 23S rRNA and position 2 of adenine 37 in tRNAs. This Petrotoga mobilis (strain DSM 10674 / SJ95) protein is Probable dual-specificity RNA methyltransferase RlmN.